A 335-amino-acid chain; its full sequence is tRNA N6-adenosine threonylcarbamoyltransferase (335 aa).

Positions 111, 115, and 132 each coordinate Fe cation. Substrate-binding positions include 132 to 136 (YVSGG), Asp164, Gly177, Glu181, and Asn260. Asp288 provides a ligand contact to Fe cation.

The protein belongs to the KAE1 / TsaD family. As to quaternary structure, monomer. Component of the KEOPS complex that consists of Kae1, Bud32, Cgi121 and Pcc1; the whole complex dimerizes. The cofactor is Fe(2+).

The protein resides in the cytoplasm. It carries out the reaction L-threonylcarbamoyladenylate + adenosine(37) in tRNA = N(6)-L-threonylcarbamoyladenosine(37) in tRNA + AMP + H(+). Required for the formation of a threonylcarbamoyl group on adenosine at position 37 (t(6)A37) in tRNAs that read codons beginning with adenine. Is a component of the KEOPS complex that is probably involved in the transfer of the threonylcarbamoyl moiety of threonylcarbamoyl-AMP (TC-AMP) to the N6 group of A37. Kae1 likely plays a direct catalytic role in this reaction, but requires other protein(s) of the complex to fulfill this activity. The sequence is that of tRNA N6-adenosine threonylcarbamoyltransferase from Methanococcoides burtonii (strain DSM 6242 / NBRC 107633 / OCM 468 / ACE-M).